We begin with the raw amino-acid sequence, 203 residues long: High-molecular weight cobalt-containing nitrile hydratase subunit alpha (203 aa).

Co(3+) is bound by residues Cys-102, Cys-105, Ser-106, and Cys-107.

The protein belongs to the nitrile hydratase subunit alpha family. In terms of assembly, heterodimer of an alpha and a beta chain. Requires Co(3+) as cofactor.

The catalysed reaction is an aliphatic primary amide = an aliphatic nitrile + H2O. Functionally, NHase catalyzes the hydration of various nitrile compounds to the corresponding amides. The protein is High-molecular weight cobalt-containing nitrile hydratase subunit alpha (nhhA) of Rhodococcus rhodochrous.